The chain runs to 298 residues: uncharacterized protein (298 aa).

Catalysis depends on charge relay system residues Thr-43 and Tyr-105. Catalysis depends on Tyr-131, which acts as the Proton donor. Lys-159 (schiff-base intermediate with substrate) is an active-site residue.

It belongs to the DapA family. In terms of assembly, homotetramer.

The protein resides in the cytoplasm. This is an uncharacterized protein from Pyrococcus furiosus (strain ATCC 43587 / DSM 3638 / JCM 8422 / Vc1).